We begin with the raw amino-acid sequence, 203 residues long: Peptidyl-tRNA hydrolase (203 aa).

Tyr14 contacts tRNA. Residue His19 is the Proton acceptor of the active site. TRNA is bound by residues Tyr64, Asn66, and Asn112.

The protein belongs to the PTH family. As to quaternary structure, monomer.

Its subcellular location is the cytoplasm. The catalysed reaction is an N-acyl-L-alpha-aminoacyl-tRNA + H2O = an N-acyl-L-amino acid + a tRNA + H(+). In terms of biological role, hydrolyzes ribosome-free peptidyl-tRNAs (with 1 or more amino acids incorporated), which drop off the ribosome during protein synthesis, or as a result of ribosome stalling. Catalyzes the release of premature peptidyl moieties from peptidyl-tRNA molecules trapped in stalled 50S ribosomal subunits, and thus maintains levels of free tRNAs and 50S ribosomes. This is Peptidyl-tRNA hydrolase from Methylobacterium nodulans (strain LMG 21967 / CNCM I-2342 / ORS 2060).